The following is a 109-amino-acid chain: Ribonuclease P protein component (109 aa).

This sequence belongs to the RnpA family. Consists of a catalytic RNA component (M1 or rnpB) and a protein subunit.

It catalyses the reaction Endonucleolytic cleavage of RNA, removing 5'-extranucleotides from tRNA precursor.. Functionally, RNaseP catalyzes the removal of the 5'-leader sequence from pre-tRNA to produce the mature 5'-terminus. It can also cleave other RNA substrates such as 4.5S RNA. The protein component plays an auxiliary but essential role in vivo by binding to the 5'-leader sequence and broadening the substrate specificity of the ribozyme. In Streptococcus agalactiae serotype Ia (strain ATCC 27591 / A909 / CDC SS700), this protein is Ribonuclease P protein component.